We begin with the raw amino-acid sequence, 630 residues long: Ankyrin repeat protein OPG025 (630 aa).

ANK repeat units follow at residues 36-69, 70-100, 103-134, 174-210, 338-367, and 408-437; these read DGET…YKNI, NDFD…EINS, NGIN…PTCS, MGKT…EMCH, KHIN…VVVN, and HGRS…DINI.

The protein belongs to the orthopoxvirus OPG025 family. As to quaternary structure, interacts with components of host SCF complex CUL1 and SKP1 and components of the cullin deneddylation/COP9 signalosome complex subunits COPS7A and COPS7B.

In terms of biological role, plays a role in the inhibition of host immune repsonse by counteracting the action of interferons on early events in the viral replication cycle. In Monkeypox virus, this protein is Ankyrin repeat protein OPG025 (OPG025).